A 501-amino-acid polypeptide reads, in one-letter code: Lysine--tRNA ligase (501 aa).

Glutamate 411 and glutamate 418 together coordinate Mg(2+).

It belongs to the class-II aminoacyl-tRNA synthetase family. In terms of assembly, homodimer. Requires Mg(2+) as cofactor.

It localises to the cytoplasm. The catalysed reaction is tRNA(Lys) + L-lysine + ATP = L-lysyl-tRNA(Lys) + AMP + diphosphate. The protein is Lysine--tRNA ligase of Pseudomonas aeruginosa (strain ATCC 15692 / DSM 22644 / CIP 104116 / JCM 14847 / LMG 12228 / 1C / PRS 101 / PAO1).